The sequence spans 314 residues: Mitochondrial 2-oxoglutarate/malate carrier protein (314 aa).

Residue Ala2 is modified to N-acetylalanine. Ser6 is modified (phosphoserine). Solcar repeat units follow at residues 23-108 (VKFL…LFER), 117-208 (PGFL…SKQF), and 217-306 (DNIL…MNKA). Residues 24-42 (KFLFGGLAGMGATVFVQPL) form a helical membrane-spanning segment. Residue Lys57 is modified to N6-succinyllysine. Lys73 carries the post-translational modification N6-acetyllysine. A helical transmembrane segment spans residues 83–101 (GLSAGLLRQATYTTTRLGI). Tyr102 is modified (phosphotyrosine). Helical transmembrane passes span 119–140 (FLLK…GTPA), 183–202 (GCIP…LASY), and 222–240 (HFCA…SMPV). Lys256 bears the N6-acetyllysine mark. A helical transmembrane segment spans residues 281–300 (GFTPYYARLGPHTVLTFIFL).

The protein belongs to the mitochondrial carrier (TC 2.A.29) family. In terms of assembly, interacts with SMIM26. In terms of tissue distribution, most highly expressed in the heart.

The protein resides in the mitochondrion inner membrane. The enzyme catalyses (S)-malate(in) + 2-oxoglutarate(out) = (S)-malate(out) + 2-oxoglutarate(in). It catalyses the reaction malonate(in) + 2-oxoglutarate(out) = malonate(out) + 2-oxoglutarate(in). The catalysed reaction is succinate(in) + 2-oxoglutarate(out) = succinate(out) + 2-oxoglutarate(in). It carries out the reaction maleate(in) + 2-oxoglutarate(out) = maleate(out) + 2-oxoglutarate(in). The enzyme catalyses oxaloacetate(in) + 2-oxoglutarate(out) = oxaloacetate(out) + 2-oxoglutarate(in). Its function is as follows. Catalyzes the transport of 2-oxoglutarate (alpha-oxoglutarate) across the inner mitochondrial membrane in an electroneutral exchange for malate. Can also exchange 2-oxoglutarate for other dicarboxylic acids such as malonate, succinate, maleate and oxaloacetate, although with lower affinity. Contributes to several metabolic processes, including the malate-aspartate shuttle, the oxoglutarate/isocitrate shuttle, in gluconeogenesis from lactate, and in nitrogen metabolism. Maintains mitochondrial fusion and fission events, and the organization and morphology of cristae. Involved in the regulation of apoptosis. Helps protect from cytotoxic-induced apoptosis by modulating glutathione levels in mitochondria. This is Mitochondrial 2-oxoglutarate/malate carrier protein (SLC25A11) from Homo sapiens (Human).